Consider the following 215-residue polypeptide: Adenylate kinase (215 aa).

Residue 10–15 participates in ATP binding; the sequence is GAGKGT. The NMP stretch occupies residues 30–59; that stretch reads STGDMLRAAVKAGSPLGQQVKGVMDSGGLV. AMP is bound by residues Thr-31, Arg-36, 57–59, 85–88, and Gln-92; these read GLV and GFPR. Positions 122-159 are LID; it reads GRRVHPASGRVYHTEHNPPKVAGKDDVTGEDLIQREDD. ATP contacts are provided by residues Arg-123 and 132 to 133; that span reads VY. 2 residues coordinate AMP: Arg-156 and Arg-167. Gly-201 provides a ligand contact to ATP.

This sequence belongs to the adenylate kinase family. Monomer.

Its subcellular location is the cytoplasm. It carries out the reaction AMP + ATP = 2 ADP. It functions in the pathway purine metabolism; AMP biosynthesis via salvage pathway; AMP from ADP: step 1/1. Catalyzes the reversible transfer of the terminal phosphate group between ATP and AMP. Plays an important role in cellular energy homeostasis and in adenine nucleotide metabolism. This Pseudomonas paraeruginosa (strain DSM 24068 / PA7) (Pseudomonas aeruginosa (strain PA7)) protein is Adenylate kinase.